The sequence spans 1163 residues: AF4/FMR2 family member 4 (1163 aa).

A compositionally biased stretch (basic and acidic residues) spans 1–19 (MNREDRNVLRMKERERRNQ). 4 disordered regions span residues 1–48 (MNRE…EDKL), 76–312 (AIPK…ASGD), 324–904 (THSW…PRRT), and 1034–1073 (NSYN…SSGA). Residues 115 to 128 (PSTSQSQKRSSGLQ) show a composition bias toward polar residues. The residue at position 120 (serine 120) is a Phosphoserine. Composition is skewed to low complexity over residues 129–148 (SGHS…NSSG) and 177–194 (RSSS…NSSH). Basic and acidic residues predominate over residues 198–217 (HGNDHHSKEHQRSKSPRDPD). A Phosphoserine modification is found at serine 212. Composition is skewed to polar residues over residues 227–251 (PFSS…SMLQ), 273–285 (EHYS…NSMT), and 350–375 (KESQ…NGHQ). A phosphoserine mark is found at serine 387, serine 388, serine 389, and serine 392. Positions 403–412 (PRSTPGSNSE) are enriched in polar residues. The span at 413–429 (PSHHNSEGADNSRDDSS) shows a compositional bias: basic and acidic residues. Positions 430-462 (SHSGSESSSGSDSESESSSSDSEANEPSQSASP) are enriched in low complexity. 3 positions are modified to phosphoserine: serine 487, serine 490, and serine 491. 3 stretches are compositionally biased toward polar residues: residues 488–501 (PASS…SSQG), 510–528 (GTGN…SSAT), and 549–560 (SPAQSDSTTQRR). Serine 549 carries the post-translational modification Phosphoserine. A compositionally biased stretch (basic and acidic residues) spans 568 to 586 (KKAEKAAAEEPRGGLKIES). A Glycyl lysine isopeptide (Lys-Gly) (interchain with G-Cter in SUMO2) cross-link involves residue lysine 583. The span at 599–612 (SRHKAATKGSRKPN) shows a compositional bias: basic residues. Positions 613-627 (IKKESKSSPRPTAEK) are enriched in basic and acidic residues. Serine 671 is modified (phosphoserine). Residue threonine 674 is modified to Phosphothreonine. Serine 680, serine 694, serine 703, and serine 706 each carry phosphoserine. Tyrosine 712 carries the phosphotyrosine modification. 3 stretches are compositionally biased toward basic and acidic residues: residues 730-761 (PYKE…EKVS), 769-789 (KNED…DKNS), and 799-811 (ESSK…EKDL). Residue serine 814 is modified to Phosphoserine. At lysine 822 the chain carries N6-acetyllysine. Serine 836, serine 1043, serine 1055, serine 1058, and serine 1062 each carry phosphoserine. The segment covering 836–862 (SQSSSLKSSSNSNKETSGSSKNSSSTS) has biased composition (low complexity). A compositionally biased stretch (low complexity) spans 1062–1073 (SPGNSGNYSSGA).

Belongs to the AF4 family. In terms of assembly, component of the super elongation complex (SEC), at least composed of EAF1, EAF2, CDK9, MLLT3/AF9, AFF (AFF1 or AFF4), the P-TEFb complex and ELL (ELL, ELL2 or ELL3). Interacts with ELL3; the interaction is direct. Interacts with ELL2; the interaction is direct and leads to stabilize ELL2 and prevent ELL2 ubiquitination and degradation. In terms of processing, dephosphorylated at Ser-549 by the PNUTS-PP1 complex, promoting RNA polymerase II transcription pause-release. As to expression, ubiquitously expressed. Strongly expressed in heart, placenta, skeletal muscle, pancreas and to a lower extent in brain.

The protein resides in the nucleus. It localises to the chromosome. Functionally, key component of the super elongation complex (SEC), a complex required to increase the catalytic rate of RNA polymerase II transcription by suppressing transient pausing by the polymerase at multiple sites along the DNA. In the SEC complex, AFF4 acts as a central scaffold that recruits other factors through direct interactions with ELL proteins (ELL, ELL2 or ELL3) and the P-TEFb complex. In case of infection by HIV-1 virus, the SEC complex is recruited by the viral Tat protein to stimulate viral gene expression. This is AF4/FMR2 family member 4 (AFF4) from Homo sapiens (Human).